A 47-amino-acid chain; its full sequence is Protein PsbN (47 aa).

Residues 7 to 29 (VAISISCLLISFTGYALYTAFGN) form a helical membrane-spanning segment.

It belongs to the PsbN family.

The protein localises to the plastid membrane. Functionally, may play a role in photosystem I and II biogenesis. The sequence is that of Protein PsbN from Aneura mirabilis (Parasitic liverwort).